The chain runs to 187 residues: Phosphatidylethanolamine-binding protein 1 (187 aa).

Ala2 bears the N-acetylalanine; in peptide hippocampal cholinergic neurostimulating mark. Ser6 and Ser13 each carry phosphoserine. Phosphothreonine is present on Thr42. Residues Ser52, Ser54, Ser98, and Ser153 each carry the phosphoserine modification. The interaction with RAF1 stretch occupies residues 93–134 (KGNDISSGTVLSEYVGSGPPKDTGLHRYVWLVYEQEQPLNCD).

Belongs to the phosphatidylethanolamine-binding protein family. As to quaternary structure, has a tendency to form dimers by disulfide cross-linking. Interacts with RAF1 and this interaction is enhanced if RAF1 is phosphorylated on residues 'Ser-338', 'Ser-339', 'Tyr-340' and 'Tyr-341'. Interacts with ALOX15; in response to IL13/interleukin-13, prevents the interaction of PEBP1 with RAF1 to activate the ERK signaling cascade. Major component of epididymal secretions and sperm plasma membranes. It is present in cytosols from a variety of other tissues. Highly expressed in brain.

It localises to the cytoplasm. The protein resides in the membrane. Functionally, binds ATP, opioids and phosphatidylethanolamine. Has lower affinity for phosphatidylinositol and phosphatidylcholine. Serine protease inhibitor which inhibits thrombin, neuropsin and chymotrypsin but not trypsin, tissue type plasminogen activator and elastase. Inhibits the kinase activity of RAF1 by inhibiting its activation and by dissociating the RAF1/MEK complex and acting as a competitive inhibitor of MEK phosphorylation. HCNP may be involved in the function of the presynaptic cholinergic neurons of the central nervous system. HCNP increases the production of choline acetyltransferase but not acetylcholinesterase. Seems to be mediated by a specific receptor. The polypeptide is Phosphatidylethanolamine-binding protein 1 (Pebp1) (Rattus norvegicus (Rat)).